The following is a 113-amino-acid chain: Signal peptidase complex subunit 1 (113 aa).

Residues 1–32 lie on the Cytoplasmic side of the membrane; that stretch reads MDGMIAMLPAPLQQLSSHIDFQGQKVAERTYQ. Residues 33-53 form a helical membrane-spanning segment; that stretch reads VILTLAGIIGFFVGYSTQQLS. The Lumenal portion of the chain corresponds to 54–57; that stretch reads YAMY. A helical membrane pass occupies residues 58-78; it reads TVMGAAVFTALIILPPWPFLF. Over 79 to 113 the chain is Cytoplasmic; sequence RKNPIVWQTPIEEQEASSSSDNEKKDKKKETKKTK. The interval 89–113 is disordered; sequence IEEQEASSSSDNEKKDKKKETKKTK.

It belongs to the SPCS1 family. In terms of assembly, component of the signal peptidase complex (SPC) composed of a catalytic subunit sec-11 and three accessory subunits spcs-1, spcs-2 and spcs-3. The complex induces a local thinning of the ER membrane which is used to measure the length of the signal peptide (SP) h-region of protein substrates. This ensures the selectivity of the complex towards h-regions shorter than 18-20 amino acids.

The protein localises to the endoplasmic reticulum membrane. Its function is as follows. Component of the signal peptidase complex (SPC) which catalyzes the cleavage of N-terminal signal sequences from nascent proteins as they are translocated into the lumen of the endoplasmic reticulum. Dispensable for SPC enzymatic activity. This Caenorhabditis briggsae protein is Signal peptidase complex subunit 1.